The chain runs to 812 residues: Eukaryotic translation initiation factor 3 subunit C (812 aa).

The tract at residues 1–105 (MSRFFSRGYH…SDESDDEGKK (105 aa)) is disordered. 2 stretches are compositionally biased toward acidic residues: residues 17 to 40 (SEDEELLTSSEEELMSSSEEEVVS) and 48 to 59 (SESESAESDDDS). The PCI domain maps to 607–783 (FHQHINLDLI…EMLIFDKGDE (177 aa)).

It belongs to the eIF-3 subunit C family. Component of the eukaryotic translation initiation factor 3 (eIF-3) complex.

It localises to the cytoplasm. Its function is as follows. Component of the eukaryotic translation initiation factor 3 (eIF-3) complex, which is involved in protein synthesis of a specialized repertoire of mRNAs and, together with other initiation factors, stimulates binding of mRNA and methionyl-tRNAi to the 40S ribosome. The eIF-3 complex specifically targets and initiates translation of a subset of mRNAs involved in cell proliferation. In Eremothecium gossypii (strain ATCC 10895 / CBS 109.51 / FGSC 9923 / NRRL Y-1056) (Yeast), this protein is Eukaryotic translation initiation factor 3 subunit C.